Reading from the N-terminus, the 492-residue chain is Cytochrome P450 monooxygenase ATEG_03631 (492 aa).

The chain crosses the membrane as a helical span at residues 10–30 (FATLNPMVVVAIPVFLFVISL). Asn-309 carries N-linked (GlcNAc...) asparagine glycosylation. Residue Cys-457 participates in heme binding.

This sequence belongs to the cytochrome P450 family. Heme serves as cofactor.

The protein localises to the membrane. It functions in the pathway secondary metabolite biosynthesis. Functionally, cytochrome P450 monooxygenase; part of the cluster A that mediates the biosynthesis of azasperpyranones, members of the azaphilone family that exhibit anti-cancer activities. Azasperpyranones are synthesized by 2 clusters, A and B. Cluster A is responsible for the production of the polyhydric phenol moiety while the azaphilonoid scaffold is produced by the cluster B. The non-reducing polyketide synthase ATEG_03629 produces 5-methyl orsellinic acid, which is then reduced to 5-methyl orsellinic aldehyde by the NRPS-like protein ATEG_03630. 5-methyl orsellinic aldehyde is then first hydroxylated by the FAD-dependent monooxygenase ATEG_03635 and subsequently hydroxylated by the cytochrome P450 monooxygenase ATEG_03631 to produce the unstable polyhydric phenol precursor of azasperpyranones. On the other hand, the polyketide synthase ATEG_07659 is responsible for producing the 3,5-dimethyloctadienone moiety from acetyl-CoA, three malonyl-CoA, and two S-adenosyl methionines (SAM). The 3,5-dimethyloctadienone moiety is then loaded onto the SAT domain of ATEG_07661 and extended with four malonyl-CoA and one SAM, which leads to the formation of 2,4-dihydroxy-6-(5,7-dimethyl-2-oxo-trans-3-trans-5-nonadienyl)-3-methylbenzaldehyde (compound 8) after reductive release and aldol condensation. The FAD-dependent monooxygenase ATEG_07662 is the next enzyme in the biosynthesis sequence and hydroxylates the side chain at the benzylic position of compound 8. In Aspergillus nidulans, afoF, the ortholog of the FAD-dependent oxygenase ATEG_07660, is the key enzyme for the biosynthesis of asperfuranone by catalyzing the hydroxylation at C-8 of to prevent the formation of a six-membered ring hemiacetal intermediate and thus facilitating the formation of a five-membered ring to produce asperfuranone. In Aspergillus terreus, ATEG_07660 is probably not functional, which leads to the formation of the six-membered ring hemiacetal intermediate presperpyranone instead of asperfuranone. Finally, ATEG_03636 is involved in the condensation of the polyhydric phenol moiety produced by cluster A and the perasperpyranone precursor produced by cluster B, to yield azasperpyranone A. Further modifications of azasperpyranone A result in the production of derivatives, including azasperpyranone B to F. The sequence is that of Cytochrome P450 monooxygenase ATEG_03631 from Aspergillus terreus (strain NIH 2624 / FGSC A1156).